Reading from the N-terminus, the 529-residue chain is Peptide chain release factor 3 (529 aa).

A tr-type G domain is found at 11–280; sequence AKRRTFAIIS…GLVEWAPAPM (270 aa). GTP is bound by residues 20-27, 88-92, and 142-145; these read SHPDAGKT, DTPGH, and NKLD.

This sequence belongs to the TRAFAC class translation factor GTPase superfamily. Classic translation factor GTPase family. PrfC subfamily.

The protein localises to the cytoplasm. In terms of biological role, increases the formation of ribosomal termination complexes and stimulates activities of RF-1 and RF-2. It binds guanine nucleotides and has strong preference for UGA stop codons. It may interact directly with the ribosome. The stimulation of RF-1 and RF-2 is significantly reduced by GTP and GDP, but not by GMP. The polypeptide is Peptide chain release factor 3 (Yersinia pestis bv. Antiqua (strain Antiqua)).